Here is a 245-residue protein sequence, read N- to C-terminus: Putative [LysW]-aminoadipate/[LysW]-glutamate kinase (245 aa).

The substrate site is built by Arg60 and Asn162.

The protein belongs to the acetylglutamate kinase family. LysZ subfamily.

Its subcellular location is the cytoplasm. The enzyme catalyses [amino-group carrier protein]-C-terminal-N-(1,4-dicarboxybutan-1-yl)-L-glutamine + ATP = [amino-group carrier protein]-C-terminal-N-(1-carboxy-5-phosphooxy-5-oxopentan-1-yl)-L-glutamine + ADP. It carries out the reaction [amino-group carrier protein]-C-terminal-gamma-(L-glutamyl)-L-glutamate + ATP = [amino-group carrier protein]-C-terminal-gamma-(5-phospho-L-glutamyl)-L-glutamate + ADP. It participates in amino-acid biosynthesis; L-lysine biosynthesis via AAA pathway; L-lysine from L-alpha-aminoadipate (Thermus route): step 2/5. It functions in the pathway amino-acid biosynthesis; L-arginine biosynthesis. Involved in both the arginine and lysine biosynthetic pathways. Phosphorylates the LysW-bound precursors glutamate (for arginine biosynthesis), respectively alpha-aminoadipate (for lysine biosynthesis). The polypeptide is Putative [LysW]-aminoadipate/[LysW]-glutamate kinase (Pyrococcus abyssi (strain GE5 / Orsay)).